The primary structure comprises 530 residues: Structure-specific endonuclease subunit SLX1 homolog 2 (530 aa).

Positions 4 to 89 constitute a GIY-YIG domain; the sequence is RFHCVYLLTS…PTKSTRLKTQ (86 aa). The segment at 232–365 adopts an SLX1-type zinc-finger fold; sequence CALCSLPLRS…PSQPCPCPLC (134 aa). 3 disordered regions span residues 276 to 306, 410 to 438, and 474 to 502; these read ATMGQSTRNERSGEYSNKIKDDSNDGTMDAH, NSSLTERKSRRKAKPALGQKRNRGEYCGD, and LPPSGDEGYACDSSRRGVGGSKHTTRMTD. Basic and acidic residues predominate over residues 283–298; that stretch reads RNERSGEYSNKIKDDS.

The protein belongs to the SLX1 family. As to quaternary structure, forms a heterodimer with a member of the SLX4 family. A divalent metal cation is required as a cofactor.

Its subcellular location is the nucleus. Its function is as follows. Catalytic subunit of a heterodimeric structure-specific endonuclease that resolves DNA secondary structures generated during DNA repair and recombination. Has endonuclease activity towards branched DNA substrates, introducing single-strand cuts in duplex DNA close to junctions with ss-DNA. In Trypanosoma cruzi (strain CL Brener), this protein is Structure-specific endonuclease subunit SLX1 homolog 2.